The chain runs to 361 residues: Phosphoserine aminotransferase (361 aa).

Position 43 (Arg43) interacts with L-glutamate. Residues 77 to 78 (AS), Trp103, Thr152, Asp172, and Gln195 contribute to the pyridoxal 5'-phosphate site. Lys196 is subject to N6-(pyridoxal phosphate)lysine. 237–238 (NT) is a pyridoxal 5'-phosphate binding site.

This sequence belongs to the class-V pyridoxal-phosphate-dependent aminotransferase family. SerC subfamily. In terms of assembly, homodimer. The cofactor is pyridoxal 5'-phosphate.

The protein localises to the cytoplasm. The enzyme catalyses O-phospho-L-serine + 2-oxoglutarate = 3-phosphooxypyruvate + L-glutamate. The catalysed reaction is 4-(phosphooxy)-L-threonine + 2-oxoglutarate = (R)-3-hydroxy-2-oxo-4-phosphooxybutanoate + L-glutamate. The protein operates within amino-acid biosynthesis; L-serine biosynthesis; L-serine from 3-phospho-D-glycerate: step 2/3. Its pathway is cofactor biosynthesis; pyridoxine 5'-phosphate biosynthesis; pyridoxine 5'-phosphate from D-erythrose 4-phosphate: step 3/5. Its function is as follows. Catalyzes the reversible conversion of 3-phosphohydroxypyruvate to phosphoserine and of 3-hydroxy-2-oxo-4-phosphonooxybutanoate to phosphohydroxythreonine. This chain is Phosphoserine aminotransferase, found in Desulfosudis oleivorans (strain DSM 6200 / JCM 39069 / Hxd3) (Desulfococcus oleovorans).